The following is a 486-amino-acid chain: Protein nucleotidyltransferase YdiU (486 aa).

Glycine 90, glycine 92, arginine 93, lysine 113, aspartate 125, glycine 126, arginine 176, and arginine 183 together coordinate ATP. Residue aspartate 252 is the Proton acceptor of the active site. Mg(2+) is bound by residues asparagine 253 and aspartate 262. Aspartate 262 contributes to the ATP binding site.

It belongs to the SELO family. Mg(2+) serves as cofactor. It depends on Mn(2+) as a cofactor.

It catalyses the reaction L-seryl-[protein] + ATP = 3-O-(5'-adenylyl)-L-seryl-[protein] + diphosphate. The enzyme catalyses L-threonyl-[protein] + ATP = 3-O-(5'-adenylyl)-L-threonyl-[protein] + diphosphate. It carries out the reaction L-tyrosyl-[protein] + ATP = O-(5'-adenylyl)-L-tyrosyl-[protein] + diphosphate. The catalysed reaction is L-histidyl-[protein] + UTP = N(tele)-(5'-uridylyl)-L-histidyl-[protein] + diphosphate. It catalyses the reaction L-seryl-[protein] + UTP = O-(5'-uridylyl)-L-seryl-[protein] + diphosphate. The enzyme catalyses L-tyrosyl-[protein] + UTP = O-(5'-uridylyl)-L-tyrosyl-[protein] + diphosphate. In terms of biological role, nucleotidyltransferase involved in the post-translational modification of proteins. It can catalyze the addition of adenosine monophosphate (AMP) or uridine monophosphate (UMP) to a protein, resulting in modifications known as AMPylation and UMPylation. This chain is Protein nucleotidyltransferase YdiU, found in Pseudomonas aeruginosa (strain ATCC 15692 / DSM 22644 / CIP 104116 / JCM 14847 / LMG 12228 / 1C / PRS 101 / PAO1).